Here is a 183-residue protein sequence, read N- to C-terminus: Deoxyuridine 5'-triphosphate nucleotidohydrolase (183 aa).

Substrate-binding positions include 67–69, asparagine 80, 84–86, and lysine 94; these read RSG and TID. Positions 138–183 are disordered; it reads RAEGGFGSTGGHAGLDPASGTSGQVAEGGPTGGNRYASVVSDREGQ. Gly residues predominate over residues 141–150; that stretch reads GGFGSTGGHA.

Belongs to the dUTPase family. Requires Mg(2+) as cofactor.

It catalyses the reaction dUTP + H2O = dUMP + diphosphate + H(+). It participates in pyrimidine metabolism; dUMP biosynthesis; dUMP from dCTP (dUTP route): step 2/2. In terms of biological role, this enzyme is involved in nucleotide metabolism: it produces dUMP, the immediate precursor of thymidine nucleotides and it decreases the intracellular concentration of dUTP so that uracil cannot be incorporated into DNA. The sequence is that of Deoxyuridine 5'-triphosphate nucleotidohydrolase from Streptomyces coelicolor (strain ATCC BAA-471 / A3(2) / M145).